Here is a 393-residue protein sequence, read N- to C-terminus: Protein TsgA (393 aa).

12 helical membrane-spanning segments follow: residues Trp-11–Met-31, Phe-51–Pro-71, Phe-78–Leu-98, Ala-101–Ile-121, Leu-134–Phe-154, Trp-162–Gly-182, Ile-206–Ile-226, Ala-245–Leu-265, Ile-273–Gln-293, Trp-298–Gly-318, Phe-332–Val-352, and Leu-361–Val-381.

The protein belongs to the major facilitator superfamily. TsgA family.

It is found in the cell inner membrane. This chain is Protein TsgA, found in Salmonella heidelberg (strain SL476).